The sequence spans 391 residues: Na(+)/H(+) antiporter NhaA (391 aa).

11 helical membrane passes run 14–34 (AGGI…NSPL), 59–79 (LLLW…GLEV), 95–115 (SLPT…YLFF), 124–144 (VGWA…MALL), 154–174 (VFLL…IALF), 177–197 (TDLS…LVAL), 213–233 (IILW…GVVI), 261–281 (FLIL…NVGF), 287–307 (PVPV…VLLF), 328–348 (IAPV…IASL), and 363–383 (IGIL…LSKV).

It belongs to the NhaA Na(+)/H(+) (TC 2.A.33) antiporter family.

It is found in the cell inner membrane. The enzyme catalyses Na(+)(in) + 2 H(+)(out) = Na(+)(out) + 2 H(+)(in). Its function is as follows. Na(+)/H(+) antiporter that extrudes sodium in exchange for external protons. The polypeptide is Na(+)/H(+) antiporter NhaA (Shewanella amazonensis (strain ATCC BAA-1098 / SB2B)).